A 450-amino-acid chain; its full sequence is Sorting nexin-4 (450 aa).

Met1 is subject to N-acetylmethionine. The interval 1-46 (MEQAPPDPERQLQPAPLEPLGSPDAGLGAAVGKEAEGAGEESSGVD) is disordered. Ser22 is subject to Phosphoserine. Residues 61-187 (SVSEAEKRTG…YLFLTQEGNW (127 aa)) enclose the PX domain. Residues Arg106, Ser108, Lys132, and Arg154 each coordinate a 1,2-diacyl-sn-glycero-3-phospho-(1D-myo-inositol-3-phosphate).

This sequence belongs to the sorting nexin family. Heterodimer; heterodimerizes with SNX7 or SNX30. Interacts with WWC1/KIBRA. Identified in a complex with WWC1/KIBRA and dynein components DYNLL1 and DYNC1I2. Interacts with BIN1.

The protein localises to the early endosome membrane. Involved in the regulation of endocytosis and in several stages of intracellular trafficking. Plays a role in recycling endocytosed transferrin receptor and prevent its degradation. Involved in autophagosome assembly by regulating trafficking and recycling of phospholipid scramblase ATG9A. The chain is Sorting nexin-4 from Homo sapiens (Human).